The following is a 249-amino-acid chain: BPI fold-containing family A member 1 (249 aa).

A signal peptide spans 1–15 (MFQVAGLIVFCGLLA). The interval 81 to 86 (LLGGLL) is important for surfactant activity and antibacterial properties. Asn-151 is a glycosylation site (N-linked (GlcNAc...) asparagine). A disulfide bridge connects residues Cys-173 and Cys-217.

This sequence belongs to the BPI/LBP/Plunc superfamily. Plunc family. As to quaternary structure, monomer. Interacts (via N-terminus) with SCNN1B, a subunit of the heterotrimeric epithelial sodium channel (ENaC); this inhibits proteolytic activation of ENaC. As to expression, expressed in lung and trachea.

It is found in the secreted. Its function is as follows. Lipid-binding protein which shows high specificity for the surfactant phospholipid dipalmitoylphosphatidylcholine (DPPC). Plays a role in the innate immune responses of the upper airways. Reduces the surface tension in secretions from airway epithelia and inhibits the formation of biofilm by pathogenic Gram-negative bacteria, such as P.aeruginosa and K.pneumoniae. Negatively regulates proteolytic cleavage of SCNN1G, an event that is required for activation of the epithelial sodium channel (ENaC), and thereby contributes to airway surface liquid homeostasis and proper clearance of mucus. Plays a role in the airway inflammatory response after exposure to irritants. May attract macrophages and neutrophils. The chain is BPI fold-containing family A member 1 (BPIFA1) from Sus scrofa (Pig).